The sequence spans 234 residues: Conidial surface nicotinamide adenine dinucleotide glycohydrolase nadA (234 aa).

Residues 1-20 (MIFTNAILVISALLPATVLS) form the signal peptide. Residues 21-117 (LQHTEDSLFP…LDTEEQPILG (97 aa)) are thump. 2 cysteine pairs are disulfide-bonded: C33-C80 and C38-C50. Residues N45, N95, and N118 are each glycosylated (N-linked (GlcNAc...) asparagine). One can recognise a TNT domain in the interval 120 to 212 (TLPVGMKLDR…GLIDDGYLRR (93 aa)). Residue R129 is part of the active site. Residues F130, T136, and R148 each contribute to the NAD(+) site. Q194 is a catalytic residue. Residues S216, D219, E220, and E223 each contribute to the Ca(2+) site.

Belongs to the fungal surface NADase family. As to quaternary structure, homodimer. Post-translationally, N-glycosylated.

The protein resides in the secreted. The enzyme catalyses NAD(+) + H2O = ADP-D-ribose + nicotinamide + H(+). It catalyses the reaction NADP(+) + H2O = ADP-D-ribose 2'-phosphate + nicotinamide + H(+). The catalytic activity is positively regulated by calcium via its binding to the calcium-binding site. Conidial surface nicotinamide adenine dinucleotide glycohydrolase that cleave NAD(+) and NADP(+) but not their reduced counterparts, NADH and NADPH. Lacks both ADP-ribosyl cyclase and base exchange activity and does not mediate synthesis of calcium messengers cADPR or NAADP. Plays a role in pathogenicity by depleting the host's NAD(+) pool. The protein is Conidial surface nicotinamide adenine dinucleotide glycohydrolase nadA of Aspergillus fumigatus (strain ATCC MYA-4609 / CBS 101355 / FGSC A1100 / Af293) (Neosartorya fumigata).